Consider the following 264-residue polypeptide: MKEYLNFLQFILDHGVAKTDRTGIGTKSVFGYEMRFNLREGFPLVTTKKIHLKSVIYELLWFLRGDTNIQFLNDNGVTIWDEWADENGDLGPIYGKQWRRWHCPDGRTVDQMQRLIREIKTNPDSRRLIVSAWNVGELDQMALPPCHLLFQFYVADGFLSCKLTQRSADAFLGVPFNIASYSLLTHLIARQCNLKAGEFIWSGGDCHIYNTHQDQVSTQLSREPRALPQLIINRDPSSLYDYNFNDFSIVNYHPHPAIKAPVAV.

Arg-21 contacts dUMP. His-51 provides a ligand contact to (6R)-5,10-methylene-5,6,7,8-tetrahydrofolate. 126–127 (RR) contributes to the dUMP binding site. The active-site Nucleophile is the Cys-146. DUMP-binding positions include 166-169 (RSAD), Asn-177, and 207-209 (HIY). Asp-169 serves as a coordination point for (6R)-5,10-methylene-5,6,7,8-tetrahydrofolate. Ala-263 is a binding site for (6R)-5,10-methylene-5,6,7,8-tetrahydrofolate.

Belongs to the thymidylate synthase family. Bacterial-type ThyA subfamily. As to quaternary structure, homodimer.

The protein resides in the cytoplasm. It catalyses the reaction dUMP + (6R)-5,10-methylene-5,6,7,8-tetrahydrofolate = 7,8-dihydrofolate + dTMP. Its pathway is pyrimidine metabolism; dTTP biosynthesis. Its function is as follows. Catalyzes the reductive methylation of 2'-deoxyuridine-5'-monophosphate (dUMP) to 2'-deoxythymidine-5'-monophosphate (dTMP) while utilizing 5,10-methylenetetrahydrofolate (mTHF) as the methyl donor and reductant in the reaction, yielding dihydrofolate (DHF) as a by-product. This enzymatic reaction provides an intracellular de novo source of dTMP, an essential precursor for DNA biosynthesis. The polypeptide is Thymidylate synthase (Coxiella burnetii (strain Dugway 5J108-111)).